The chain runs to 2465 residues: Serine/threonine-protein kinase TOR (2465 aa).

11 HEAT repeats span residues 184 to 221, 271 to 308, 348 to 389, 549 to 587, 588 to 625, 717 to 755, 761 to 799, 888 to 926, 981 to 1018, 1022 to 1059, and 1061 to 1098; these read VHVPEFVDAIWVALRDPKQAVRERAVEALRACLHVIEK, SRYREVADIVLNYLRHRDQLVRRSITSLLPRIAHFLRD, AELV…AMGP, RLVEEIVEKLLMAAVADADVGVRSSVFKALYRNPSFDDF, LAQADIMTSIFVALNDEEYHVRELAISVAGRLSEKNPA, QYLPELMPLVVDALLDGGAVSKREVAVATLGQVIQSTGY, NEYPPLLGLLLKLLNGELEWSTRLEVLKVLGIMGALDPH, PYLPKVLPELFRAVRMCEDGGLKEFITWKLGTLVSIVRQ, MYILHILPSCIQVLGDAERCNDYYYVPDILHTLEVFGG, EHMHLVAPVLVRLFKVELVDIRRRAIVTLTKLIPTVQV, and THVSVLVHHLKLVLDGNNDDLRKDAAEALCCLAHALGE. The segment at 1158-1191 is disordered; sequence DFGGVPSEEADETQRQPRSHQVNDVRLRSAGEAS. Residues 1297–1877 enclose the FAT domain; the sequence is LLGALAEKCR…MYPLLVACKS (581 aa). The PI3K/PI4K catalytic domain maps to 2051-2369; sequence FVPQLIVITS…PPRGAREREL (319 aa). Residues 2057 to 2063 are G-loop; sequence VITSKQR. Positions 2230 to 2238 are catalytic loop; sequence GLGDRHPSN. Positions 2250–2275 are activation loop; it reads HIDFGDCFEASMNREKFPEKVPFRLT. The interval 2401–2431 is disordered; the sequence is RDFSSGSSLSGAGSSTQHGNEHLASGDTREV. Positions 2404–2415 are enriched in low complexity; the sequence is SSGSSLSGAGSS. Residues 2433–2465 enclose the FATC domain; it reads PGLSVKVQVQRLILQATSHENLCQNYVGWCPFW.

The protein belongs to the PI3/PI4-kinase family. As to quaternary structure, the target of rapamycin complex 1 (TORC1) is composed of at least RAPTOR, LST8 and TOR.

The enzyme catalyses L-seryl-[protein] + ATP = O-phospho-L-seryl-[protein] + ADP + H(+). It catalyses the reaction L-threonyl-[protein] + ATP = O-phospho-L-threonyl-[protein] + ADP + H(+). With respect to regulation, insensitive to inhibition by rapamycin. In terms of biological role, component of TORC1 complex, which is an essential cell growth regulator that controls plant development. Acts through the phosphorylation of downstream effectors that are recruited by the binding partner RAPTOR. Acts by activating transcription, protein synthesis and ribosome biogenesis, and inhibiting mRNA degradation and autophagy. The protein is Serine/threonine-protein kinase TOR of Oryza sativa subsp. japonica (Rice).